Here is a 777-residue protein sequence, read N- to C-terminus: Glucocorticoid receptor (777 aa).

The segment covering 1-14 has biased composition (basic and acidic residues); it reads MDSKESLTPGKEEN. The disordered stretch occupies residues 1–22; it reads MDSKESLTPGKEENPSSVLTQE. Residues 1–420 are modulating; sequence MDSKESLTPG…TATTGPPPKL (420 aa). A Phosphothreonine modification is found at T8. R23 carries the omega-N-methylarginine modification. Phosphoserine occurs at positions 45, 113, 134, and 141. Positions 130 to 183 are disordered; it reads NRSTSVPENPKSSASSSVSAAPKEKEFPKTHSDVSSEQQNLKGQTGTNGGNAKL. Residues 134–150 are compositionally biased toward low complexity; it reads SVPENPKSSASSSVSAA. Positions 151-163 are enriched in basic and acidic residues; it reads PKEKEFPKTHSDV. The span at 164 to 174 shows a compositional bias: polar residues; sequence SSEQQNLKGQT. 3 positions are modified to phosphoserine: S203, S211, and S226. A Glycyl lysine isopeptide (Lys-Gly) (interchain with G-Cter in SUMO2) cross-link involves residue K258. Phosphoserine is present on S267. Residues K277 and K293 each participate in a glycyl lysine isopeptide (Lys-Gly) (interchain with G-Cter in SUMO); alternate cross-link. Glycyl lysine isopeptide (Lys-Gly) (interchain with G-Cter in SUMO2); alternate cross-links involve residues K277 and K293. The segment covering 394-414 has biased composition (low complexity); it reads SSPSMRPDVSSPPSSSSTATT. The tract at residues 394-415 is disordered; it reads SSPSMRPDVSSPPSSSSTATTG. The residue at position 404 (S404) is a Phosphoserine. Residue K419 forms a Glycyl lysine isopeptide (Lys-Gly) (interchain with G-Cter in ubiquitin) linkage. 2 NR C4-type zinc fingers span residues 421-441 and 457-481; these read CLVC…CGSC and CAGR…YRKC. The segment at residues 421-486 is a DNA-binding region (nuclear receptor); that stretch reads CLVCSDEASG…RYRKCLQAGM (66 aa). An N6-acetyllysine mark is found at K480, K492, K494, and K495. Residues 485 to 777 are interaction with CLOCK; the sequence is GMNLEARKTK…NIRKLLFHQK (293 aa). Residues 487 to 523 are hinge; the sequence is NLEARKTKKKIKGIQQATTGVSQETSENPANKTIVPA. An NR LBD domain is found at 524–758; that stretch reads TLPQLTPTLV…FPEMLAEIIT (235 aa). The interval 532-697 is interaction with CRY1; that stretch reads LVSLLEVIEP…EIRMTYIKEL (166 aa). A Glycyl lysine isopeptide (Lys-Gly) (interchain with G-Cter in SUMO) cross-link involves residue K703.

The protein belongs to the nuclear hormone receptor family. NR3 subfamily. As to quaternary structure, heteromultimeric cytoplasmic complex with HSP90AA1, HSPA1A/HSPA1B, and FKBP5 or another immunophilin such as PPID, STIP1, or the immunophilin homolog PPP5C. Upon ligand binding FKBP5 dissociates from the complex and FKBP4 takes its place, thereby linking the complex to dynein and mediating transport to the nucleus, where the complex dissociates. Probably forms a complex composed of chaperones HSP90 and HSP70, co-chaperones CDC37, PPP5C, TSC1 and client protein TSC2, CDK4, AKT, RAF1 and NR3C1; this complex does not contain co-chaperones STIP1/HOP and PTGES3/p23. Directly interacts with UNC45A. Binds to DNA as a homodimer, and as heterodimer with NR3C2 or the retinoid X receptor. Binds STAT5A and STAT5B homodimers and heterodimers. Interacts with NRIP1, POU2F1, POU2F2 and TRIM28. Interacts with several coactivator complexes, including the SMARCA4 complex, CREBBP/EP300, TADA2L (Ada complex) and p160 coactivators such as NCOA2 and NCOA6. Interaction with BAG1 inhibits transactivation. Interacts with HEXIM1 and TGFB1I1. Interacts with NCOA1. Interacts with NCOA3, SMARCA4, SMARCC1, SMARCD1, and SMARCE1. Interacts with CLOCK, CRY1 and CRY2 in a ligand-dependent fashion. Interacts with CIART. Interacts with RWDD3. Interacts with UBE2I/UBC9 and this interaction is enhanced in the presence of RWDD3. Interacts with GRIP1. Interacts with NR4A3 (via nuclear receptor DNA-binding domain), represses transcription activity of NR4A3 on the POMC promoter Nur response element (NurRE). Directly interacts with PNRC2 to attract and form a complex with UPF1 and DCP1A; the interaction leads to rapid mRNA degradation. Interacts with GSK3B. Interacts with FNIP1 and FNIP2. Interacts (via C-terminus) with HNRNPU (via C-terminus). Interacts with MCM3AP. Interacts (via domain NR LBD) with HSP90AA1 and HSP90AB1. In the absence of hormonal ligand, interacts with TACC1. Interacts (via NR LBD domain) with ZNF764 (via KRAB domain); the interaction regulates transcription factor activity of NR3C1 by directing its actions toward certain biologic pathways. Acetylation by CLOCK reduces its binding to glucocorticoid response elements and its transcriptional activity. Post-translationally, increased proteasome-mediated degradation in response to glucocorticoids. In terms of processing, phosphorylated in the absence of hormone; becomes hyperphosphorylated in the presence of glucocorticoid. The Ser-203, Ser-226 and Ser-404-phosphorylated forms are mainly cytoplasmic, and the Ser-211-phosphorylated form is nuclear. Phosphorylation at Ser-211 increases transcriptional activity. Phosphorylation at Ser-203, Ser-226 and Ser-404 decreases signaling capacity. Phosphorylation at Ser-404 may protect from glucocorticoid-induced apoptosis. Phosphorylation at Ser-203 and Ser-211 is not required in regulation of chromosome segregation. May be dephosphorylated by PPP5C, attenuates NR3C1 action. Ubiquitinated by UBR5, leading to its degradation: UBR5 specifically recognizes and binds ligand-bound NR3C1 when it is not associated with coactivators (NCOAs). In presence of NCOAs, the UBR5-degron is not accessible, preventing its ubiquitination and degradation. Post-translationally, sumoylation at Lys-277 and Lys-293 negatively regulates its transcriptional activity. Sumoylation at Lys-703 positively regulates its transcriptional activity in the presence of RWDD3. Sumoylation at Lys-277 and Lys-293 is dispensable whereas sumoylation at Lys-703 is critical for the stimulatory effect of RWDD3 on its transcriptional activity. Heat shock increases sumoylation in a RWDD3-dependent manner.

It is found in the cytoplasm. The protein localises to the nucleus. The protein resides in the mitochondrion. It localises to the cytoskeleton. Its subcellular location is the spindle. It is found in the microtubule organizing center. The protein localises to the centrosome. The protein resides in the chromosome. It localises to the nucleoplasm. Functionally, receptor for glucocorticoids (GC). Has a dual mode of action: as a transcription factor that binds to glucocorticoid response elements (GRE), both for nuclear and mitochondrial DNA, and as a modulator of other transcription factors. Affects inflammatory responses, cellular proliferation and differentiation in target tissues. Involved in chromatin remodeling. Plays a role in rapid mRNA degradation by binding to the 5' UTR of target mRNAs and interacting with PNRC2 in a ligand-dependent manner which recruits the RNA helicase UPF1 and the mRNA-decapping enzyme DCP1A, leading to RNA decay. Could act as a coactivator for STAT5-dependent transcription upon growth hormone (GH) stimulation and could reveal an essential role of hepatic GR in the control of body growth. Mediates glucocorticoid-induced apoptosis. Promotes accurate chromosome segregation during mitosis. May act as a tumor suppressor. May play a negative role in adipogenesis through the regulation of lipolytic and antilipogenic gene expression. The sequence is that of Glucocorticoid receptor (NR3C1) from Saguinus oedipus (Cotton-top tamarin).